Reading from the N-terminus, the 149-residue chain is Putative pre-16S rRNA nuclease (149 aa).

It belongs to the YqgF nuclease family.

It localises to the cytoplasm. Functionally, could be a nuclease involved in processing of the 5'-end of pre-16S rRNA. This Burkholderia orbicola (strain MC0-3) protein is Putative pre-16S rRNA nuclease.